A 450-amino-acid polypeptide reads, in one-letter code: Bifunctional protein GlmU (450 aa).

Residues 1 to 226 are pyrophosphorylase; it reads MLAVAVLAAG…PDEVNGINNR (226 aa). UDP-N-acetyl-alpha-D-glucosamine contacts are provided by residues 7 to 10, Lys-21, Gln-73, and 78 to 79; these read LAAG and GT. Asp-103 is a Mg(2+) binding site. UDP-N-acetyl-alpha-D-glucosamine contacts are provided by Gly-140, Glu-155, Asn-170, and Asn-224. A Mg(2+)-binding site is contributed by Asn-224. The interval 227–247 is linker; the sequence is KQLAQCEGVLQQRLRDYWMDE. The N-acetyltransferase stretch occupies residues 248–450; sequence GVTFVDPASC…TKDNWANRSI (203 aa). The UDP-N-acetyl-alpha-D-glucosamine site is built by Arg-329 and Lys-347. Residue His-359 is the Proton acceptor of the active site. Residues Tyr-362 and Asn-373 each coordinate UDP-N-acetyl-alpha-D-glucosamine. Acetyl-CoA-binding positions include Ala-376, 382 to 383, Ala-419, and Arg-436; that span reads NY.

The protein in the N-terminal section; belongs to the N-acetylglucosamine-1-phosphate uridyltransferase family. In the C-terminal section; belongs to the transferase hexapeptide repeat family. Homotrimer. Mg(2+) is required as a cofactor.

It is found in the cytoplasm. The catalysed reaction is alpha-D-glucosamine 1-phosphate + acetyl-CoA = N-acetyl-alpha-D-glucosamine 1-phosphate + CoA + H(+). It carries out the reaction N-acetyl-alpha-D-glucosamine 1-phosphate + UTP + H(+) = UDP-N-acetyl-alpha-D-glucosamine + diphosphate. It functions in the pathway nucleotide-sugar biosynthesis; UDP-N-acetyl-alpha-D-glucosamine biosynthesis; N-acetyl-alpha-D-glucosamine 1-phosphate from alpha-D-glucosamine 6-phosphate (route II): step 2/2. The protein operates within nucleotide-sugar biosynthesis; UDP-N-acetyl-alpha-D-glucosamine biosynthesis; UDP-N-acetyl-alpha-D-glucosamine from N-acetyl-alpha-D-glucosamine 1-phosphate: step 1/1. Its pathway is bacterial outer membrane biogenesis; LPS lipid A biosynthesis. In terms of biological role, catalyzes the last two sequential reactions in the de novo biosynthetic pathway for UDP-N-acetylglucosamine (UDP-GlcNAc). The C-terminal domain catalyzes the transfer of acetyl group from acetyl coenzyme A to glucosamine-1-phosphate (GlcN-1-P) to produce N-acetylglucosamine-1-phosphate (GlcNAc-1-P), which is converted into UDP-GlcNAc by the transfer of uridine 5-monophosphate (from uridine 5-triphosphate), a reaction catalyzed by the N-terminal domain. The protein is Bifunctional protein GlmU of Synechococcus sp. (strain CC9902).